The chain runs to 59 residues: Salivary thrombin inhibitor XC-43 (59 aa).

The signal sequence occupies residues 1–23 (MNLQFLFIFIAFCVMLFAQIVTA).

Interacts with human F2 (thrombin). In terms of tissue distribution, salivary gland (at protein level).

The protein localises to the secreted. Anticoagulant protein that acts as a competitive inhibitor of host thrombin. Inhibits thrombin-mediated host platelet aggregation. The sequence is that of Salivary thrombin inhibitor XC-43 from Xenopsylla cheopis (Oriental rat flea).